The primary structure comprises 254 residues: MSRAGLDKKPDQVAAMFDQVARRYDVTNAVLSAGLDRTWRTATARALALAPGLRVLDVAAGTATSSRAFAAAGADVVACDFSLGMLAQARRRLADAAARAGAGAGTGGAGTGGGRVLLAAGDGLRLPFADGSFDRVTISFGLRNVAEGDVCLAELLRVTRPGGVLAVCEFSRPVWRPVRTAYMEYLMRALPAVARAVSSSPDSYVYLAESIRAWPGQAALAETIRAAGWTRVGWRNLSGGIVAVHRAVRPGGDD.

S-adenosyl-L-methionine-binding positions include Thr-62, Asp-80, 122-123 (DG), and Ser-139.

This sequence belongs to the class I-like SAM-binding methyltransferase superfamily. MenG/UbiE family.

It catalyses the reaction a 2-demethylmenaquinol + S-adenosyl-L-methionine = a menaquinol + S-adenosyl-L-homocysteine + H(+). Its pathway is quinol/quinone metabolism; menaquinone biosynthesis; menaquinol from 1,4-dihydroxy-2-naphthoate: step 2/2. Functionally, methyltransferase required for the conversion of demethylmenaquinol (DMKH2) to menaquinol (MKH2). This chain is Demethylmenaquinone methyltransferase, found in Parafrankia sp. (strain EAN1pec).